A 259-amino-acid chain; its full sequence is Leucine-rich repeat-containing protein 61 (259 aa).

LRR repeat units follow at residues 32–53, 54–75, 76–97, and 98–119; these read SILL…GECL, GLEW…ASLR, QLAV…ATCE, and NLQS…QCLA. The region spanning 138-178 is the LRRCT domain; sequence NPLCANPSYWAAVRELLPGLKVIDGERVIGRGSEFYQLCRD.

This is Leucine-rich repeat-containing protein 61 (LRRC61) from Homo sapiens (Human).